The following is a 79-amino-acid chain: RNA-binding protein Hfq (79 aa).

Residues glycine 10–valine 69 form the Sm domain.

It belongs to the Hfq family. As to quaternary structure, homohexamer.

In terms of biological role, RNA chaperone that binds small regulatory RNA (sRNAs) and mRNAs to facilitate mRNA translational regulation in response to envelope stress, environmental stress and changes in metabolite concentrations. Also binds with high specificity to tRNAs. This chain is RNA-binding protein Hfq, found in Cupriavidus necator (strain ATCC 17699 / DSM 428 / KCTC 22496 / NCIMB 10442 / H16 / Stanier 337) (Ralstonia eutropha).